The primary structure comprises 101 residues: Putative monooxygenase Rv0793 (101 aa).

Residues 5–93 enclose the ABM domain; the sequence is VAVIARFMPR…LTRPVAVTVL (89 aa).

Homodimer.

In terms of biological role, putative monooygenase that might be involved in antibiotic biosynthesis, or may act as reactive oxygen species scavenger that could help in evading host defenses. The protein is Putative monooxygenase Rv0793 of Mycobacterium tuberculosis (strain ATCC 25618 / H37Rv).